The chain runs to 511 residues: Voltage-gated potassium channel KCNC1 (511 aa).

The Cytoplasmic segment spans residues 1 to 190 (MGQGDESERI…EDPYSSRYAR (190 aa)). A Phosphoserine modification is found at Ser44. Residues His77, Cys83, Cys104, and Cys105 each contribute to the Zn(2+) site. Residues 121-147 (SFGGAPLDNSADDADADGPGDSGDGED) are disordered. Phosphoserine occurs at positions 130, 142, 158, and 160. A compositionally biased stretch (acidic residues) spans 130–147 (SADDADADGPGDSGDGED). A helical transmembrane segment spans residues 191 to 209 (YVAFASLFFILVSITTFCL). 2 N-linked (GlcNAc...) asparagine glycosylation sites follow: Asn220 and Asn229. A helical transmembrane segment spans residues 248-267 (IEGVCVVWFTFEFLMRVVFC). The Cytoplasmic segment spans residues 268-276 (PNKVEFIKN). A helical membrane pass occupies residues 277 to 295 (SLNIIDFVAILPFYLEVGL). A helical; Voltage-sensor transmembrane segment spans residues 309–331 (FLRVVRFVRILRIFKLTRHFVGL). Topologically, residues 332 to 344 (RVLGHTLRASTNE) are cytoplasmic. A helical membrane pass occupies residues 345-366 (FLLLIIFLALGVLIFATMIYYA). 4 residues coordinate K(+): Thr400, Leu401, Gly402, and Tyr403. A Selectivity filter motif is present at residues 400–405 (TLGYGD). The chain crosses the membrane as a helical span at residues 415 to 436 (LVGALCALAGVLTIAMPVPVIV). The Cytoplasmic portion of the chain corresponds to 437–511 (NNFGMYYSLA…GRKPLRGMSI (75 aa)). Position 474 is a phosphoserine (Ser474). Thr483 carries the phosphothreonine modification.

Belongs to the potassium channel family. C (Shaw) (TC 1.A.1.2) subfamily. Kv3.1/KCNC1 sub-subfamily. In terms of assembly, homotetramer. Homomultimer. Heteromultimer with KCNG3, KCNG4 and KCNV2. Heteromultimer with KCNC2. Heterotetramer with KCNC3. Interacts with the ancillary subunits KCNE1 and KCNE2; the interaction modulates channel activity. N-glycosylated; contains sialylated glycans. Detected in cerebellum. Detected in brain (at protein level). Detected in brain.

It localises to the cell membrane. It is found in the cell projection. Its subcellular location is the axon. The protein localises to the presynaptic cell membrane. The catalysed reaction is K(+)(in) = K(+)(out). In terms of biological role, voltage-gated potassium channel that opens in response to the voltage difference across the membrane and through which potassium ions pass in accordance with their electrochemical gradient. The mechanism is time-dependent and inactivation is slow. Plays an important role in the rapid repolarization of fast-firing brain neurons. Can form functional homotetrameric channels and heterotetrameric channels that contain variable proportions of KCNC2, and possibly other family members as well. Contributes to fire sustained trains of very brief action potentials at high frequency in pallidal neurons. This chain is Voltage-gated potassium channel KCNC1, found in Mus musculus (Mouse).